Consider the following 218-residue polypeptide: uncharacterized protein (218 aa).

Residues H57, H59, D61, H62, H138, D158, and H199 each contribute to the Zn(2+) site.

It belongs to the metallo-beta-lactamase superfamily. Glyoxalase II family. Requires Zn(2+) as cofactor.

This is an uncharacterized protein from Mycobacterium leprae (strain TN).